We begin with the raw amino-acid sequence, 527 residues long: GMP synthase [glutamine-hydrolyzing] (527 aa).

The 199-residue stretch at 4 to 202 folds into the Glutamine amidotransferase type-1 domain; sequence KILILDFGSQ…VLKICGAKPD (199 aa). Residue cysteine 81 is the Nucleophile of the active site. Residues histidine 176 and glutamate 178 contribute to the active site. One can recognise a GMPS ATP-PPase domain in the interval 203–395; the sequence is WEMGNYIDEA…LGLPPSMVYR (193 aa). An ATP-binding site is contributed by 230 to 236; that stretch reads SGGVDSS.

In terms of assembly, homodimer.

It carries out the reaction XMP + L-glutamine + ATP + H2O = GMP + L-glutamate + AMP + diphosphate + 2 H(+). It participates in purine metabolism; GMP biosynthesis; GMP from XMP (L-Gln route): step 1/1. Functionally, catalyzes the synthesis of GMP from XMP. The chain is GMP synthase [glutamine-hydrolyzing] from Paraburkholderia phymatum (strain DSM 17167 / CIP 108236 / LMG 21445 / STM815) (Burkholderia phymatum).